The sequence spans 140 residues: Protein archease (140 aa).

Positions 12, 139, and 140 each coordinate Ca(2+).

It belongs to the archease family.

Activates the tRNA-splicing ligase complex by facilitating the enzymatic turnover of catalytic subunit RtcB. Acts by promoting the guanylylation of RtcB, a key intermediate step in tRNA ligation. Can also alter the NTP specificity of RtcB such that ATP, dGTP or ITP is used efficiently. May also act as a chaperone or modulator of proteins involved in DNA or RNA processing. This chain is Protein archease, found in Methanothermobacter thermautotrophicus (strain ATCC 29096 / DSM 1053 / JCM 10044 / NBRC 100330 / Delta H) (Methanobacterium thermoautotrophicum).